A 61-amino-acid chain; its full sequence is Small ribosomal subunit protein uS14 (61 aa).

Zn(2+) is bound by residues C24, C27, C40, and C43.

It belongs to the universal ribosomal protein uS14 family. Zinc-binding uS14 subfamily. In terms of assembly, part of the 30S ribosomal subunit. Contacts proteins S3 and S10. Zn(2+) is required as a cofactor.

Binds 16S rRNA, required for the assembly of 30S particles and may also be responsible for determining the conformation of the 16S rRNA at the A site. The chain is Small ribosomal subunit protein uS14 from Halothermothrix orenii (strain H 168 / OCM 544 / DSM 9562).